The sequence spans 265 residues: MNRFLLLMSLYLLGSARGTSSQPNELSGSIDHQTSVQQLPGEFFSLENPSDAEALYETSSGLNTLSEHGSSEHGSSKHTVAEHTSGEHAESEHASGEPAATEHAEGEHTVGEQPSGEQPSGEHLSGEQPLSELESGEQPSDEQPSGEHGSGEQPSGEQASGEQPSGEHASGEQASGAPISSTSTGTILNCYTCAYMNDQGKCLRGEGTCITQNSQQCMLKKIFEGGKLQFMVQGCENMCPSMNLFSHGTRMQIICCRNQSFCNKI.

An N-terminal signal peptide occupies residues 1–21 (MNRFLLLMSLYLLGSARGTSS). Residues 62–181 (LNTLSEHGSS…EQASGAPISS (120 aa)) form a disordered region. Tandem repeats lie at residues 66–70 (SEHGS), 71–75 (SEHGS), 85–88 (SGEH), 91–95 (SEHAS), 110–114 (VGEQP), 115–119 (SGEQP), 120–123 (SGEH), 125–129 (SGEQP), 135–139 (SGEQP), 140–144 (SDEQP), 145–148 (SGEH), 150–154 (SGEQP), 155–159 (SGEQA), 160–164 (SGEQP), 165–168 (SGEH), and 170–174 (SGEQA). The 3 X 5 AA repeats of S-E-H-[GA]-S stretch occupies residues 66 to 95 (SEHGSSEHGSSKHTVAEHTSGEHAESEHAS). Positions 69-110 (GSSEHGSSKHTVAEHTSGEHAESEHASGEPAATEHAEGEHTV) are enriched in basic and acidic residues. A 4 X 4 AA repeats of S-G-E-H region spans residues 85–168 (SGEHAESEHA…ASGEQPSGEH (84 aa)). The 9 X 5 AA repeats of [SV]-G-E-Q-[PSA] stretch occupies residues 110–174 (VGEQPSGEQP…SGEHASGEQA (65 aa)). Residues 152-163 (EQPSGEQASGEQ) show a composition bias toward polar residues. N-linked (GlcNAc...) asparagine glycosylation occurs at N258.

Testis.

The protein resides in the cytoplasmic vesicle. It localises to the secretory vesicle. Its subcellular location is the acrosome. This Homo sapiens (Human) protein is Acrosomal protein SP-10 (ACRV1).